The following is a 41-amino-acid chain: MKIRNSLKSLKDRHRDNRVIRRRGRTYVINKTNRRFKARQG.

The protein belongs to the bacterial ribosomal protein bL36 family.

The sequence is that of Large ribosomal subunit protein bL36 from Sphingopyxis alaskensis (strain DSM 13593 / LMG 18877 / RB2256) (Sphingomonas alaskensis).